Reading from the N-terminus, the 819-residue chain is Ion-translocating oxidoreductase complex subunit C (819 aa).

4Fe-4S ferredoxin-type domains follow at residues 368–398 (EYAE…QQLY) and 408–437 (KSEE…IQYF). C378, C381, C384, C388, C417, C420, C423, and C427 together coordinate [4Fe-4S] cluster. Composition is skewed to basic and acidic residues over residues 465–477 (QARM…ERKA) and 485–513 (ARRE…KANE). Disordered regions lie at residues 465-568 (QARM…NAKK), 580-677 (AKKL…TALD), and 692-793 (AKKL…PKKA). Composition is skewed to polar residues over residues 554–565 (VENQEQQTQPTN) and 587–601 (NSTS…TAEN). The span at 602 to 614 (QVEKTKSAVEKTQ) shows a compositional bias: basic and acidic residues. A compositionally biased stretch (polar residues) spans 641–656 (QTNSTSEAISNSQTAE). Residues 658–671 (EVEKTKSAVEKTEE) show a composition bias toward basic and acidic residues. 2 stretches are compositionally biased toward polar residues: residues 699-712 (NSAS…QTAE) and 755-768 (NSTS…QTAE). Residues 770 to 782 (EVEKTKSAVEKTQ) show a composition bias toward basic and acidic residues.

It belongs to the 4Fe4S bacterial-type ferredoxin family. RnfC subfamily. The complex is composed of six subunits: RnfA, RnfB, RnfC, RnfD, RnfE and RnfG. [4Fe-4S] cluster is required as a cofactor.

The protein localises to the cell inner membrane. Functionally, part of a membrane-bound complex that couples electron transfer with translocation of ions across the membrane. This is Ion-translocating oxidoreductase complex subunit C from Haemophilus influenzae (strain ATCC 51907 / DSM 11121 / KW20 / Rd).